Reading from the N-terminus, the 341-residue chain is NADH-quinone oxidoreductase subunit H (341 aa).

A run of 9 helical transmembrane segments spans residues 4–24 (LVNI…LTYF), 38–58 (PSVV…KLLI), 70–90 (ILFI…WAVI), 115–135 (VGVL…IIAG), 161–181 (IGLI…GEMV), 187–207 (MPFW…ISLL), 239–259 (LFFL…TIFF), 275–295 (IPGL…FIWI), and 314–334 (VFLP…LFTG).

It belongs to the complex I subunit 1 family. NDH-1 is composed of 14 different subunits. Subunits NuoA, H, J, K, L, M, N constitute the membrane sector of the complex.

It is found in the cell membrane. It catalyses the reaction a quinone + NADH + 5 H(+)(in) = a quinol + NAD(+) + 4 H(+)(out). Functionally, NDH-1 shuttles electrons from NADH, via FMN and iron-sulfur (Fe-S) centers, to quinones in the respiratory chain. The immediate electron acceptor for the enzyme in this species is believed to be ubiquinone. Couples the redox reaction to proton translocation (for every two electrons transferred, four hydrogen ions are translocated across the cytoplasmic membrane), and thus conserves the redox energy in a proton gradient. This subunit may bind ubiquinone. This is NADH-quinone oxidoreductase subunit H from Wolbachia pipientis wMel.